A 117-amino-acid polypeptide reads, in one-letter code: Large ribosomal subunit protein eL34 (117 aa).

Residue Ser12 is modified to Phosphoserine. N6-acetyllysine is present on residues Lys36 and Lys43. Residue Lys108 forms a Glycyl lysine isopeptide (Lys-Gly) (interchain with G-Cter in SUMO2) linkage.

The protein belongs to the eukaryotic ribosomal protein eL34 family. In terms of assembly, component of the large ribosomal subunit.

It localises to the cytoplasm. The protein localises to the cytosol. The protein resides in the endoplasmic reticulum. Component of the large ribosomal subunit. The ribosome is a large ribonucleoprotein complex responsible for the synthesis of proteins in the cell. In Sus scrofa (Pig), this protein is Large ribosomal subunit protein eL34 (RPL34).